Reading from the N-terminus, the 512-residue chain is Catalase (512 aa).

Residues H60 and N133 contribute to the active site. Y344 is a heme binding site. The residue at position 363 (S363) is a Phosphoserine. A compositionally biased stretch (basic and acidic residues) spans 488–505; that stretch reads EVKKMEEKAPKPINKGEP. The disordered stretch occupies residues 488-512; it reads EVKKMEEKAPKPINKGEPHMFQGSS.

Belongs to the catalase family. Heme is required as a cofactor.

It localises to the peroxisome matrix. It catalyses the reaction 2 H2O2 = O2 + 2 H2O. In terms of biological role, catalyzes the degradation of hydrogen peroxide (H(2)O(2)) generated by peroxisomal oxidases to water and oxygen, thereby protecting cells from the toxic effects of hydrogen peroxide. The protein is Catalase (cta1) of Schizosaccharomyces pombe (strain 972 / ATCC 24843) (Fission yeast).